The chain runs to 505 residues: uncharacterized protein (505 aa).

Residues 1–16 are compositionally biased toward polar residues; it reads MPPTASLTRSPPTASQ. Residues 1–474 form a disordered region; it reads MPPTASLTRS…TPPTASLTRT (474 aa). Low complexity-rich tracts occupy residues 17–33 and 40–59; these read TRTL…PRAS and TASL…PPRA. Residues 66-78 show a composition bias toward polar residues; it reads SRASLTRTLSRAS. 3 stretches are compositionally biased toward low complexity: residues 96–122, 129–140, and 147–158; these read SLTR…PPRT, PRTSQTRTPPRA, and SRASRTRTPPRA. Polar residues-rich tracts occupy residues 165-177 and 188-200; these read SRAS…SRAS and TRTP…TRTP. Over residues 201 to 226 the composition is skewed to low complexity; it reads PTASLTRASRTRTPPRTSQTRTPPRA. 7 stretches are compositionally biased toward polar residues: residues 233-254, 265-293, 309-329, 345-365, 373-383, 399-408, and 435-448; these read SRAS…SRAS, TRTP…SLTR, LTRT…SLTR, TRTPSRASLTR, LTRSPPTASL, and LTRS…TRTP. The segment covering 453 to 474 has biased composition (low complexity); that stretch reads LRRTPPRTSLTRTPPTASLTRT.

This is an uncharacterized protein from Homo sapiens (Human).